The following is a 169-amino-acid chain: Cell division inhibitor SulA (169 aa).

The interval 106 to 112 (ALRTGNY) is ftsZ binding. Residues 162 to 169 (KIHSNLYH) are lon protease binding.

Belongs to the SulA family. As to quaternary structure, interacts with FtsZ. In terms of processing, is rapidly cleaved and degraded by the Lon protease once DNA damage is repaired.

Functionally, component of the SOS system and an inhibitor of cell division. Accumulation of SulA causes rapid cessation of cell division and the appearance of long, non-septate filaments. In the presence of GTP, binds a polymerization-competent form of FtsZ in a 1:1 ratio, thus inhibiting FtsZ polymerization and therefore preventing it from participating in the assembly of the Z ring. This mechanism prevents the premature segregation of damaged DNA to daughter cells during cell division. This Salmonella gallinarum (strain 287/91 / NCTC 13346) protein is Cell division inhibitor SulA.